A 665-amino-acid chain; its full sequence is DNA ligase (665 aa).

Residues 31–35 (DQEFD), 80–81 (SL), and Glu110 contribute to the NAD(+) site. The N6-AMP-lysine intermediate role is filled by Lys112. Residues Arg133, Glu170, Lys285, and Lys309 each contribute to the NAD(+) site. Zn(2+) is bound by residues Cys403, Cys406, Cys421, and Cys427. The BRCT domain occupies 587 to 665 (EHTDKLAGKS…SEEEFLQMIE (79 aa)).

It belongs to the NAD-dependent DNA ligase family. LigA subfamily. Mg(2+) serves as cofactor. The cofactor is Mn(2+).

The enzyme catalyses NAD(+) + (deoxyribonucleotide)n-3'-hydroxyl + 5'-phospho-(deoxyribonucleotide)m = (deoxyribonucleotide)n+m + AMP + beta-nicotinamide D-nucleotide.. In terms of biological role, DNA ligase that catalyzes the formation of phosphodiester linkages between 5'-phosphoryl and 3'-hydroxyl groups in double-stranded DNA using NAD as a coenzyme and as the energy source for the reaction. It is essential for DNA replication and repair of damaged DNA. The polypeptide is DNA ligase (Phocaeicola vulgatus (strain ATCC 8482 / DSM 1447 / JCM 5826 / CCUG 4940 / NBRC 14291 / NCTC 11154) (Bacteroides vulgatus)).